A 131-amino-acid polypeptide reads, in one-letter code: Small ribosomal subunit protein uS8 (131 aa).

The protein belongs to the universal ribosomal protein uS8 family. As to quaternary structure, part of the 30S ribosomal subunit. Contacts proteins S5 and S12.

One of the primary rRNA binding proteins, it binds directly to 16S rRNA central domain where it helps coordinate assembly of the platform of the 30S subunit. This chain is Small ribosomal subunit protein uS8, found in Legionella pneumophila subsp. pneumophila (strain Philadelphia 1 / ATCC 33152 / DSM 7513).